A 777-amino-acid chain; its full sequence is Shutoff protein (777 aa).

Disordered regions lie at residues 1 to 55 (MEED…SVPV) and 261 to 283 (PLDSDQPEQNSEDGQPVVSDDDL). The segment covering 9–20 (QPDSETLTSPTS) has biased composition (polar residues). Residues 250–314 (VMDHLLIKRV…VILVTVELEC (65 aa)) form a binding to host EIF4G region. One can recognise an RRM domain in the interval 317–435 (RFFANPQTLR…ELWTAFSERT (119 aa)). A phosphotyrosine; by host mark is found at tyrosine 334 and tyrosine 649. The disordered stretch occupies residues 652 to 777 (PQTGEELNTP…AAARLVESQP (126 aa)). A compositionally biased stretch (polar residues) spans 656 to 665 (EELNTPSPSA). Gly residues predominate over residues 728–738 (GAGGQTPQGRG). Residues 753-763 (TRSEPASDGES) show a composition bias toward basic and acidic residues.

Belongs to the adenoviridae shutoff protein family. In terms of assembly, monomer. Interacts with hexon protein; this interaction allows chaperoning and trimerization of hexon proteins. Interacts (via N-terminus) with host initiation factor EIF4G (via C-terminus). Interacts (via RRM domain) with viral mRNAs that contain the tripartite leader; this interaction allows ribosome shunting and expression of viral late mRNAs. In terms of processing, might be cleaved by the viral protease. Post-translationally, phosphorylated. Tyrosine phosphorylation enhances preferential binding to tripartite leader mRNAs and allows ribosome shunting. Methylated. Asymmetric dimethylation by host PRMT1 of the Arg/Gly-rich region may regulate shutoff protein binding to hexon and promote the capsid assembly in the nucleus.

The protein localises to the host cytoplasm. Protein that inhibits host translation while promoting late viral translation by ribosome shunting. Blocks host cap-dependent translation by binding to eIF4G, displacing MKNK1 from cap initiation complexes and preventing EIF4E phosphorylation. Binds to the tripartite leader sequence of viral late mRNAs and recruits host eIF4G, PABPC1/poly-A binding protein and 40S ribosomes subunits on viral mRNAs, allowing ribosome shunting and efficient translation of late viral mRNAs even though conventional translation via ribosome scanning from the cap has been shut off in the host cell. During assembly, acts as a chaperone protein that helps hexon proteins assembly into trimers. This Homo sapiens (Human) protein is Shutoff protein.